Reading from the N-terminus, the 287-residue chain is Probable endonuclease 4 (287 aa).

Zn(2+) contacts are provided by histidine 69, histidine 109, glutamate 144, aspartate 178, histidine 181, histidine 215, aspartate 228, histidine 230, and glutamate 260.

This sequence belongs to the AP endonuclease 2 family. Zn(2+) is required as a cofactor.

The catalysed reaction is Endonucleolytic cleavage to 5'-phosphooligonucleotide end-products.. Functionally, endonuclease IV plays a role in DNA repair. It cleaves phosphodiester bonds at apurinic or apyrimidinic (AP) sites, generating a 3'-hydroxyl group and a 5'-terminal sugar phosphate. In Thermotoga neapolitana (strain ATCC 49049 / DSM 4359 / NBRC 107923 / NS-E), this protein is Probable endonuclease 4.